The chain runs to 140 residues: Small ribosomal subunit protein uS9A (140 aa).

It belongs to the universal ribosomal protein uS9 family. As to quaternary structure, component of the small ribosomal subunit (SSU). Mature yeast ribosomes consist of a small (40S) and a large (60S) subunit. The 40S small subunit contains 1 molecule of ribosomal RNA (18S rRNA) and at least 33 different proteins. The large 60S subunit contains 3 rRNA molecules (25S, 5.8S and 5S rRNA) and at least 46 different proteins.

Its subcellular location is the cytoplasm. Component of the ribosome, a large ribonucleoprotein complex responsible for the synthesis of proteins in the cell. The small ribosomal subunit (SSU) binds messenger RNAs (mRNAs) and translates the encoded message by selecting cognate aminoacyl-transfer RNA (tRNA) molecules. The large subunit (LSU) contains the ribosomal catalytic site termed the peptidyl transferase center (PTC), which catalyzes the formation of peptide bonds, thereby polymerizing the amino acids delivered by tRNAs into a polypeptide chain. The nascent polypeptides leave the ribosome through a tunnel in the LSU and interact with protein factors that function in enzymatic processing, targeting, and the membrane insertion of nascent chains at the exit of the ribosomal tunnel. The chain is Small ribosomal subunit protein uS9A (rps1601) from Schizosaccharomyces pombe (strain 972 / ATCC 24843) (Fission yeast).